We begin with the raw amino-acid sequence, 118 residues long: Large ribosomal subunit protein uL22 (118 aa).

It belongs to the universal ribosomal protein uL22 family. As to quaternary structure, part of the 50S ribosomal subunit.

Functionally, this protein binds specifically to 23S rRNA; its binding is stimulated by other ribosomal proteins, e.g. L4, L17, and L20. It is important during the early stages of 50S assembly. It makes multiple contacts with different domains of the 23S rRNA in the assembled 50S subunit and ribosome. The globular domain of the protein is located near the polypeptide exit tunnel on the outside of the subunit, while an extended beta-hairpin is found that lines the wall of the exit tunnel in the center of the 70S ribosome. In Listeria innocua serovar 6a (strain ATCC BAA-680 / CLIP 11262), this protein is Large ribosomal subunit protein uL22.